We begin with the raw amino-acid sequence, 109 residues long: Synaptobrevin-1 (109 aa).

The disordered stretch occupies residues 1-26 (MDAQGDAGAQGGSQGGPRPSNKRLQQ). Over 1–86 (MDAQGDAGAQ…KRKYWWKNIK (86 aa)) the chain is Cytoplasmic. The v-SNARE coiled-coil homology domain occupies 23–83 (RLQQTQAQVD…ATLKRKYWWK (61 aa)). The helical; Anchor for type IV membrane protein transmembrane segment at 87 to 107 (MMIIMCAIVVILIIIIVLWAG) threads the bilayer. At 108–109 (GK) the chain is on the extracellular side.

The protein belongs to the synaptobrevin family. Part of the SNARE core complex containing ric-4/SNAP25, snb-1/VAMP2 and unc-64/STX1A. This complex binds to cpx-1/CPLX1. Expressed in the nervous system notably the nerve ring, ventral cord and dorsal cord.

The protein resides in the cytoplasmic vesicle. It localises to the secretory vesicle. It is found in the synaptic vesicle membrane. The protein localises to the cell membrane. Its subcellular location is the synapse. The protein resides in the synaptosome. In terms of biological role, involved in the targeting and/or fusion of transport vesicles to their target membrane. Acts in neuronal exocytosis of synaptic transmission. Likely to have a role in cholinergic transmisson. Required for viability, coordinated movement and M3 pharynx motor neuron function. This Caenorhabditis elegans protein is Synaptobrevin-1.